A 491-amino-acid polypeptide reads, in one-letter code: Probable Xaa-Pro aminopeptidase An01g13040 (491 aa).

Positions 276, 287, 420, and 459 each coordinate Mn(2+).

This sequence belongs to the peptidase M24B family. It depends on Mn(2+) as a cofactor.

It catalyses the reaction Release of any N-terminal amino acid, including proline, that is linked to proline, even from a dipeptide or tripeptide.. Its function is as follows. Catalyzes the removal of a penultimate prolyl residue from the N-termini of peptides. This Aspergillus niger (strain ATCC MYA-4892 / CBS 513.88 / FGSC A1513) protein is Probable Xaa-Pro aminopeptidase An01g13040.